We begin with the raw amino-acid sequence, 393 residues long: UDP-N-acetylglucosamine--N-acetylmuramyl-(pentapeptide) pyrophosphoryl-undecaprenol N-acetylglucosamine transferase (393 aa).

UDP-N-acetyl-alpha-D-glucosamine contacts are provided by residues T15–G17, N129, R171, S211, and Q322.

The protein belongs to the glycosyltransferase 28 family. MurG subfamily.

The protein localises to the cell membrane. The catalysed reaction is di-trans,octa-cis-undecaprenyl diphospho-N-acetyl-alpha-D-muramoyl-L-alanyl-D-glutamyl-meso-2,6-diaminopimeloyl-D-alanyl-D-alanine + UDP-N-acetyl-alpha-D-glucosamine = di-trans,octa-cis-undecaprenyl diphospho-[N-acetyl-alpha-D-glucosaminyl-(1-&gt;4)]-N-acetyl-alpha-D-muramoyl-L-alanyl-D-glutamyl-meso-2,6-diaminopimeloyl-D-alanyl-D-alanine + UDP + H(+). The protein operates within cell wall biogenesis; peptidoglycan biosynthesis. In terms of biological role, cell wall formation. Catalyzes the transfer of a GlcNAc subunit on undecaprenyl-pyrophosphoryl-MurNAc-pentapeptide (lipid intermediate I) to form undecaprenyl-pyrophosphoryl-MurNAc-(pentapeptide)GlcNAc (lipid intermediate II). The polypeptide is UDP-N-acetylglucosamine--N-acetylmuramyl-(pentapeptide) pyrophosphoryl-undecaprenol N-acetylglucosamine transferase (Bifidobacterium longum (strain DJO10A)).